Here is a 242-residue protein sequence, read N- to C-terminus: tRNA pseudouridine synthase A (242 aa).

The active-site Nucleophile is the Asp-51. Tyr-107 provides a ligand contact to substrate.

This sequence belongs to the tRNA pseudouridine synthase TruA family. In terms of assembly, homodimer.

It carries out the reaction uridine(38/39/40) in tRNA = pseudouridine(38/39/40) in tRNA. Its function is as follows. Formation of pseudouridine at positions 38, 39 and 40 in the anticodon stem and loop of transfer RNAs. This chain is tRNA pseudouridine synthase A, found in Helicobacter pylori (strain P12).